Reading from the N-terminus, the 250-residue chain is Ribosomal RNA small subunit methyltransferase J (250 aa).

Residues 101 to 102 (RD), 117 to 118 (ER), 153 to 154 (SS), and D171 contribute to the S-adenosyl-L-methionine site.

It belongs to the methyltransferase superfamily. RsmJ family.

Its subcellular location is the cytoplasm. It carries out the reaction guanosine(1516) in 16S rRNA + S-adenosyl-L-methionine = N(2)-methylguanosine(1516) in 16S rRNA + S-adenosyl-L-homocysteine + H(+). Its function is as follows. Specifically methylates the guanosine in position 1516 of 16S rRNA. In Escherichia fergusonii (strain ATCC 35469 / DSM 13698 / CCUG 18766 / IAM 14443 / JCM 21226 / LMG 7866 / NBRC 102419 / NCTC 12128 / CDC 0568-73), this protein is Ribosomal RNA small subunit methyltransferase J.